A 337-amino-acid chain; its full sequence is BRI1 kinase inhibitor 1 (337 aa).

Polar residues predominate over residues 1–25; the sequence is METNLQQVKNSSQTFSEKQNPKQEA. Disordered regions lie at residues 1–38 and 51–72; these read METN…SSPS and SSSS…SSYQ. The span at 26 to 38 shows a compositional bias: low complexity; it reads SPSPISSTCSSPS. At tyrosine 211 the chain carries Phosphotyrosine. Residues 270–310 are disordered; that stretch reads SAPASMRTSPTNSGHLRVSTAGLSSSSGSTSSSSSDSTMEE. The span at 288 to 310 shows a compositional bias: low complexity; sequence STAGLSSSSGSTSSSSSDSTMEE.

As to quaternary structure, interacts (via C-terminus) with BRI1 (via kinase domain). Phosphorylated on Tyr-211 in response to brassinosteroid perception, leading to its inactivation: once phosphorylated, displaced into the cytosol where it is inactive. Expressed in leaves, petioles, shoot apices, hypocotyls, roots and flowers.

It localises to the cell membrane. The protein resides in the cytoplasm. Its function is as follows. Negative regulator of brassinosteroid signaling. When associated to the membrane, limits the interaction of BRI1 with BAK1 by binding to the kinase-inactive form of BRI1. This chain is BRI1 kinase inhibitor 1 (BKI1), found in Arabidopsis thaliana (Mouse-ear cress).